We begin with the raw amino-acid sequence, 236 residues long: Probable transmembrane ascorbate ferrireductase 4 (236 aa).

A Cytochrome b561 domain is found at Phe-14–Ile-210. A run of 3 helical transmembrane segments spans residues Leu-17–Gly-37, Thr-42–Ile-62, and Val-76–Phe-96. His-44, His-77, and His-110 together coordinate heme b. A run of 3 helical transmembrane segments spans residues Trp-112–Phe-132, Thr-144–Ala-164, and Val-191–Leu-211. His-149 lines the heme b pocket.

Homodimer. Heme b serves as cofactor.

The protein localises to the membrane. The enzyme catalyses Fe(3+)(out) + L-ascorbate(in) = monodehydro-L-ascorbate radical(in) + Fe(2+)(out) + H(+). In terms of biological role, two-heme-containing cytochrome. May catalyze ascorbate-dependent trans-membrane ferric-chelate reduction. This is Probable transmembrane ascorbate ferrireductase 4 (CYB561D) from Arabidopsis thaliana (Mouse-ear cress).